Reading from the N-terminus, the 267-residue chain is MGLFDRLGRVVRANLNDLVSKAEDPEKVLEQAVIDMQEDLVQLRQAVARTIAEEKRTEQRLNQDTQEAKKWEDRAKLALTNGEENLAREALARKKSLTDTAAAYQTQLAQQRTMSENLRRNLAALEAKISEAKTKKNMLQARAKAAKANAELQQTLGGLGTSSATSAFERMENKVLDMEATSQAAGELAGFGIENQFAQLEASSGVEDELAALKASMAGGALPGTSAATPQLEAAPVDSSVPANNASQDDAVIDQELDDLRRRLNNL.

Positions 26–156 (EKVLEQAVID…KANAELQQTL (131 aa)) form a coiled coil. A disordered region spans residues 224 to 252 (GTSAATPQLEAAPVDSSVPANNASQDDAV).

This sequence belongs to the PspA/Vipp/IM30 family.

It is found in the cell inner membrane. Required for thylakoid formation. This Synechocystis sp. (strain ATCC 27184 / PCC 6803 / Kazusa) protein is Membrane-associated protein Vipp1.